We begin with the raw amino-acid sequence, 450 residues long: Bifunctional protein GlmU (450 aa).

The tract at residues 1–217 is pyrophosphorylase; that stretch reads MKTLILAAGL…VDEITGVNNR (217 aa). UDP-N-acetyl-alpha-D-glucosamine contacts are provided by residues 6-9, K20, Q68, 73-74, 95-97, G134, E146, N161, and N215; these read LAAG, GT, and YGD. Position 97 (D97) interacts with Mg(2+). N215 contributes to the Mg(2+) binding site. The segment at 218-238 is linker; that stretch reads IQLANLEKKIRRKINEKLMNQ. An N-acetyltransferase region spans residues 239 to 450; that stretch reads GVRIIDPNAV…GGQKNANNKK (212 aa). UDP-N-acetyl-alpha-D-glucosamine contacts are provided by R320 and K338. The active-site Proton acceptor is the H350. Positions 353 and 364 each coordinate UDP-N-acetyl-alpha-D-glucosamine. Acetyl-CoA is bound by residues A367, 373–374, S392, A410, and R427; that span reads NY.

The protein in the N-terminal section; belongs to the N-acetylglucosamine-1-phosphate uridyltransferase family. This sequence in the C-terminal section; belongs to the transferase hexapeptide repeat family. Homotrimer. Mg(2+) is required as a cofactor.

Its subcellular location is the cytoplasm. The enzyme catalyses alpha-D-glucosamine 1-phosphate + acetyl-CoA = N-acetyl-alpha-D-glucosamine 1-phosphate + CoA + H(+). The catalysed reaction is N-acetyl-alpha-D-glucosamine 1-phosphate + UTP + H(+) = UDP-N-acetyl-alpha-D-glucosamine + diphosphate. It functions in the pathway nucleotide-sugar biosynthesis; UDP-N-acetyl-alpha-D-glucosamine biosynthesis; N-acetyl-alpha-D-glucosamine 1-phosphate from alpha-D-glucosamine 6-phosphate (route II): step 2/2. Its pathway is nucleotide-sugar biosynthesis; UDP-N-acetyl-alpha-D-glucosamine biosynthesis; UDP-N-acetyl-alpha-D-glucosamine from N-acetyl-alpha-D-glucosamine 1-phosphate: step 1/1. It participates in bacterial outer membrane biogenesis; LPS lipid A biosynthesis. Its function is as follows. Catalyzes the last two sequential reactions in the de novo biosynthetic pathway for UDP-N-acetylglucosamine (UDP-GlcNAc). The C-terminal domain catalyzes the transfer of acetyl group from acetyl coenzyme A to glucosamine-1-phosphate (GlcN-1-P) to produce N-acetylglucosamine-1-phosphate (GlcNAc-1-P), which is converted into UDP-GlcNAc by the transfer of uridine 5-monophosphate (from uridine 5-triphosphate), a reaction catalyzed by the N-terminal domain. The polypeptide is Bifunctional protein GlmU (Thermosipho melanesiensis (strain DSM 12029 / CIP 104789 / BI429)).